Reading from the N-terminus, the 95-residue chain is Small ribosomal subunit protein bS18 (95 aa).

This sequence belongs to the bacterial ribosomal protein bS18 family. Part of the 30S ribosomal subunit. Forms a tight heterodimer with protein bS6.

Functionally, binds as a heterodimer with protein bS6 to the central domain of the 16S rRNA, where it helps stabilize the platform of the 30S subunit. The polypeptide is Small ribosomal subunit protein bS18 (Rickettsia rickettsii (strain Sheila Smith)).